Reading from the N-terminus, the 916-residue chain is Nitrate reductase [NADH] 1 (916 aa).

The tract at residues 1-77 (MAASVQPRQF…DDEEEEQEDW (77 aa)) is disordered. Positions 66–76 (GSDDEEEEQED) are enriched in acidic residues. Position 192 (cysteine 192) interacts with Mo-molybdopterin. Positions 541 to 616 (GKQFTMSEVR…LDTYRIGELI (76 aa)) constitute a Cytochrome b5 heme-binding domain. The heme site is built by histidine 576 and histidine 599. The region spanning 656–768 (RDKVPCQLVD…KGPLGHVEYT (113 aa)) is the FAD-binding FR-type domain. Residues 708–711 (RAYT), 725–729 (LIKVY), phenylalanine 730, phenylalanine 737, 742–744 (LMT), serine 792, and threonine 795 each bind FAD.

The protein belongs to the nitrate reductase family. As to quaternary structure, homodimer. Requires FAD as cofactor. Heme serves as cofactor. The cofactor is Mo-molybdopterin.

It catalyses the reaction nitrite + NAD(+) + H2O = nitrate + NADH + H(+). Nitrate reductase is a key enzyme involved in the first step of nitrate assimilation in plants, fungi and bacteria. This chain is Nitrate reductase [NADH] 1 (NIA1), found in Oryza sativa subsp. japonica (Rice).